A 633-amino-acid polypeptide reads, in one-letter code: Basic helix-loop-helix ARNT-like protein 1 (633 aa).

The segment at 1-65 (MADQRMDISS…GMDTDKDDQH (65 aa)) is disordered. Ser17 bears the Phosphoserine; by GSK3-beta mark. Over residues 24 to 33 (ISSSLSTSGM) the composition is skewed to polar residues. A Nuclear localization signal motif is present at residues 36–41 (NRKRKG). Residues 79-132 (NAREAHSQIEKRRRDKMNSFIDELASLVPTCNAMSRKLDKLTVLRMAVQHMKTL) form the bHLH domain. The residue at position 85 (Ser85) is a Phosphoserine. Ser97 carries the phosphoserine; by CK2 modification. Positions 149–159 (LSDDELKHLIL) match the Nuclear export signal 1 motif. In terms of domain architecture, PAS 1 spans 150–222 (SDDELKHLIL…EQLSSSDTAP (73 aa)). A Glycyl lysine isopeptide (Lys-Gly) (interchain with G-Cter in SUMO2 and SUMO3) cross-link involves residue Lys259. Lys266 is covalently cross-linked (Glycyl lysine isopeptide (Lys-Gly) (interchain with G-Cter in SUMO)). The region spanning 333 to 403 (PQPVNGEIRV…ECHRQVLQTR (71 aa)) is the PAS 2 domain. Residues 368–376 (LAYLPQELL) carry the Nuclear export signal 2 motif. The region spanning 408-451 (TNCYKFKIKDGSFITLRSRWFSFMNPWTKEVEYIVSTNTVVSTN) is the PAC domain. Disordered stretches follow at residues 472 to 499 (SVLQ…RAGA) and 518 to 555 (GSSP…TPDI). The span at 518-528 (GSSPSSCGSSP) shows a compositional bias: low complexity. Lys545 bears the N6-acetyllysine mark.

In terms of assembly, component of the circadian clock oscillator which includes the CRY1/2 proteins, CLOCK or NPAS2, BMAL1 or BMAL2, CSNK1D and/or CSNK1E, TIMELESS and the PER1/2/3 proteins. Forms a heterodimer with CLOCK. The CLOCK-BMAL1 heterodimer is required for E-box-dependent transactivation, for CLOCK nuclear translocation and degradation, and, for phosphorylation of both CLOCK and BMAL1. Interacts with PER1, PER2, CRY1 and CRY2 and this interaction requires a translocation to the nucleus. Interaction of the CLOCK-BMAL1 heterodimer with PER or CRY inhibits transcription activation. Ubiquitinated, leading to its proteasomal degradation. Deubiquitinated by USP9X. In terms of processing, O-glycosylated; contains O-GlcNAc. O-glycosylation by OGT prevents protein degradation by inhibiting ubiquitination. It also stabilizes the CLOCK-BMAL1 heterodimer thereby increasing CLOCK-BMAL1-mediated transcription of genes in the negative loop of the circadian clock such as PER1/2/3 and CRY1/2. Post-translationally, acetylated on Lys-545 by CLOCK during the repression phase of the circadian cycle. Acetylation facilitates recruitment of CRY1 protein and initiates the repression phase of the circadian cycle. Acetylated at Lys-545 by KAT5 during the activation phase of the cycle, leading to recruitment of the positive transcription elongation factor b (P-TEFb) and BRD4, followed by productive elongation of circadian transcripts. Deacetylated by SIRT1, which may result in decreased protein stability. Phosphorylated upon dimerization with CLOCK. Phosphorylation enhances the transcriptional activity, alters the subcellular localization and decreases the stability of the CLOCK-BMAL1 heterodimer by promoting its degradation. Phosphorylation shows circadian variations in the liver with a peak between CT10 to CT14. Phosphorylation at Ser-97 by CK2 is essential for its nuclear localization, its interaction with CLOCK and controls CLOCK nuclear entry. Dephosphorylation at Ser-85 is important for dimerization with CLOCK and transcriptional activity. In terms of processing, sumoylated on Lys-266 upon dimerization with CLOCK. Predominantly conjugated to poly-SUMO2/3 rather than SUMO1 and the level of these conjugates undergo rhythmic variation, peaking at CT9-CT12. Sumoylation localizes it exclusively to the PML body and promotes its ubiquitination in the PML body, ubiquitin-dependent proteasomal degradation and the transcriptional activity of the CLOCK-BMAL1 heterodimer. Post-translationally, undergoes lysosome-mediated degradation in a time-dependent manner in the liver.

The protein resides in the nucleus. It localises to the cytoplasm. Its subcellular location is the PML body. In terms of biological role, transcriptional activator which forms a core component of the circadian clock. The circadian clock, an internal time-keeping system, regulates various physiological processes through the generation of approximately 24 hour circadian rhythms in gene expression, which are translated into rhythms in metabolism and behavior. It is derived from the Latin roots 'circa' (about) and 'diem' (day) and acts as an important regulator of a wide array of physiological functions including metabolism, sleep, body temperature, blood pressure, endocrine, immune, cardiovascular, and renal function. Consists of two major components: the central clock, residing in the suprachiasmatic nucleus (SCN) of the brain, and the peripheral clocks that are present in nearly every tissue and organ system. Both the central and peripheral clocks can be reset by environmental cues, also known as Zeitgebers (German for 'timegivers'). The predominant Zeitgeber for the central clock is light, which is sensed by retina and signals directly to the SCN. The central clock entrains the peripheral clocks through neuronal and hormonal signals, body temperature and feeding-related cues, aligning all clocks with the external light/dark cycle. Circadian rhythms allow an organism to achieve temporal homeostasis with its environment at the molecular level by regulating gene expression to create a peak of protein expression once every 24 hours to control when a particular physiological process is most active with respect to the solar day. Transcription and translation of core clock components (CLOCK, NPAS2, BMAL1, BMAL2, PER1, PER2, PER3, CRY1 and CRY2) plays a critical role in rhythm generation, whereas delays imposed by post-translational modifications (PTMs) are important for determining the period (tau) of the rhythms (tau refers to the period of a rhythm and is the length, in time, of one complete cycle). A diurnal rhythm is synchronized with the day/night cycle, while the ultradian and infradian rhythms have a period shorter and longer than 24 hours, respectively. Disruptions in the circadian rhythms contribute to the pathology of cardiovascular diseases, cancer, metabolic syndromes and aging. A transcription/translation feedback loop (TTFL) forms the core of the molecular circadian clock mechanism. Transcription factors, CLOCK or NPAS2 and BMAL1 or BMAL2, form the positive limb of the feedback loop, act in the form of a heterodimer and activate the transcription of core clock genes and clock-controlled genes (involved in key metabolic processes), harboring E-box elements (5'-CACGTG-3') within their promoters. The core clock genes: PER1/2/3 and CRY1/2 which are transcriptional repressors form the negative limb of the feedback loop and interact with the CLOCK|NPAS2-BMAL1|BMAL2 heterodimer inhibiting its activity and thereby negatively regulating their own expression. This heterodimer also activates nuclear receptors NR1D1/2 and RORA/B/G, which form a second feedback loop and which activate and repress BMAL1 transcription, respectively. The preferred binding motif for the CLOCK-BMAL1 heterodimer is 5'-CACGTGA-3', which contains a flanking adenine nucleotide at the 3-prime end of the canonical 6-nucleotide E-box sequence. CLOCK specifically binds to the half-site 5'-CAC-3', while BMAL1 binds to the half-site 5'-GTGA-3'. Essential for the rhythmic interaction of CLOCK with ASS1 and plays a critical role in positively regulating CLOCK-mediated acetylation of ASS1. Plays a role in protecting against lethal sepsis by limiting the expression of immune checkpoint protein CD274 in macrophages in a PKM2-dependent manner. The polypeptide is Basic helix-loop-helix ARNT-like protein 1 (BMAL1) (Tyto alba (Barn owl)).